Here is a 568-residue protein sequence, read N- to C-terminus: Circadian clock protein KaiC2 (568 aa).

2 KaiC domains span residues Ile-11–Gln-250 and Glu-251–Thr-485. A phosphoserine; by autocatalysis mark is found at Ser-423 and Ser-424.

It belongs to the KaiC family. As to quaternary structure, multimerizes, probably forming homohexamers, no interaction with KaiC1 or KaiC3 is seen.

The enzyme catalyses L-seryl-[protein] + ATP = O-phospho-L-seryl-[protein] + ADP + H(+). The catalysed reaction is L-threonyl-[protein] + ATP = O-phospho-L-threonyl-[protein] + ADP + H(+). It carries out the reaction ATP + H2O = ADP + phosphate + H(+). Its function is as follows. Autophosphorylates independently of KaiA. The sequence is that of Circadian clock protein KaiC2 from Synechocystis sp. (strain ATCC 27184 / PCC 6803 / Kazusa).